The sequence spans 375 residues: Probable UDP-N-acetylglucosamine 2-epimerase (375 aa).

Belongs to the UDP-N-acetylglucosamine 2-epimerase family.

The protein localises to the cytoplasm. It carries out the reaction UDP-N-acetyl-alpha-D-glucosamine = UDP-N-acetyl-alpha-D-mannosamine. Its pathway is glycan metabolism; exopolysaccharide EPS I biosynthesis. Its function is as follows. May be involved in synthesis of N-acetyltrideoxygalactose, a component of exopolysaccharide EPS I which functions as a virulence factor. In Ralstonia solanacearum (Pseudomonas solanacearum), this protein is Probable UDP-N-acetylglucosamine 2-epimerase (epsC).